The primary structure comprises 336 residues: N6-methyladenosine RNA methyltransferase MTA1 (336 aa).

The disordered stretch occupies residues 61 to 83 (LISSEPPHLPFKTPEPKAGSGGL).

It belongs to the MT-A70-like family.

It carries out the reaction an adenosine in mRNA + S-adenosyl-L-methionine = an N(6)-methyladenosine in mRNA + S-adenosyl-L-homocysteine + H(+). N6-methyladenosine RNA methyltransferase that plays a crucial role in fungal phenotypic traits, virulence, and stress tolerance. Mediates the methylation of mRNAs to produce N6-methyladenosine (m6A)-containing mRNAs. M6A is a modification present at internal sites of mRNAs and some non-coding RNAs and plays a role in mRNA stability and processing. Mediates specifically acid phosphatase APHA mRNA stability through a YTHDF1-dependent m6A modification of the A1306, A1341, and A1666 key methylation modification sites. Also mediates the stability of the transcription factor ZAP1 mRNA via modification of residue A1935 localized in the 3'UTR. The chain is N6-methyladenosine RNA methyltransferase MTA1 from Cryphonectria parasitica (strain ATCC 38755 / EP155).